The chain runs to 661 residues: Pseudouridylate synthase 7 homolog (661 aa).

An N-acetylmethionine modification is found at M1. Positions M1 to E97 are disordered. Position 10 is a phosphoserine (S10). Over residues S36–L52 the composition is skewed to polar residues. Positions Q77 to E97 are enriched in acidic residues. S127 carries the phosphoserine modification. Catalysis depends on D294, which acts as the Nucleophile. Residues G370–R580 form the TRUD domain. Phosphothreonine is present on T610.

Belongs to the pseudouridine synthase TruD family. As to quaternary structure, interacts with SIRT1.

It is found in the nucleus. The enzyme catalyses a uridine in tRNA = a pseudouridine in tRNA. The catalysed reaction is uridine(13) in tRNA = pseudouridine(13) in tRNA. It carries out the reaction a uridine in mRNA = a pseudouridine in mRNA. Pseudouridylate synthase that catalyzes pseudouridylation of RNAs. Acts as a regulator of protein synthesis in embryonic stem cells by mediating pseudouridylation of RNA fragments derived from tRNAs (tRFs): pseudouridylated tRFs inhibit translation by targeting the translation initiation complex. Also catalyzes pseudouridylation of mRNAs: mediates pseudouridylation of mRNAs with the consensus sequence 5'-UGUAG-3'. Acts as a regulator of pre-mRNA splicing by mediating pseudouridylation of pre-mRNAs at locations associated with alternatively spliced regions. Pseudouridylation of pre-mRNAs near splice sites directly regulates mRNA splicing and mRNA 3'-end processing. In addition to mRNAs and tRNAs, binds other types of RNAs, such as snRNAs, Y RNAs and vault RNAs, suggesting that it can catalyze pseudouridylation of many RNA types. This is Pseudouridylate synthase 7 homolog from Homo sapiens (Human).